The sequence spans 962 residues: Glycine dehydrogenase (decarboxylating) (962 aa).

Position 710 is an N6-(pyridoxal phosphate)lysine (Lys710).

The protein belongs to the GcvP family. In terms of assembly, the glycine cleavage system is composed of four proteins: P, T, L and H. Pyridoxal 5'-phosphate serves as cofactor.

It catalyses the reaction N(6)-[(R)-lipoyl]-L-lysyl-[glycine-cleavage complex H protein] + glycine + H(+) = N(6)-[(R)-S(8)-aminomethyldihydrolipoyl]-L-lysyl-[glycine-cleavage complex H protein] + CO2. The glycine cleavage system catalyzes the degradation of glycine. The P protein binds the alpha-amino group of glycine through its pyridoxal phosphate cofactor; CO(2) is released and the remaining methylamine moiety is then transferred to the lipoamide cofactor of the H protein. The protein is Glycine dehydrogenase (decarboxylating) of Idiomarina loihiensis (strain ATCC BAA-735 / DSM 15497 / L2-TR).